A 391-amino-acid chain; its full sequence is Processive diacylglycerol beta-glucosyltransferase (391 aa).

Belongs to the glycosyltransferase 28 family. UgtP subfamily.

The protein resides in the cell membrane. The enzyme catalyses a 1,2-diacyl-3-O-(beta-D-glucopyranosyl)-sn-glycerol + UDP-alpha-D-glucose = a 1,2-diacyl-3-O-(beta-D-Glc-(1-&gt;6)-beta-D-Glc)-sn-glycerol + UDP + H(+). The catalysed reaction is a 1,2-diacyl-sn-glycerol + UDP-alpha-D-glucose = a 1,2-diacyl-3-O-(beta-D-glucopyranosyl)-sn-glycerol + UDP + H(+). The protein operates within glycolipid metabolism; diglucosyl-diacylglycerol biosynthesis. Processive glucosyltransferase involved in the biosynthesis of both the bilayer- and non-bilayer-forming membrane glucolipids. Is able to successively transfer two glucosyl residues to diacylglycerol (DAG), thereby catalyzing the formation of beta-monoglucosyl-DAG (3-O-(beta-D-glucopyranosyl)-1,2-diacyl-sn-glycerol) and beta-diglucosyl-DAG (3-O-(beta-D-glucopyranosyl-beta-(1-&gt;6)-D-glucopyranosyl)-1,2-diacyl-sn-glycerol). Beta-diglucosyl-DAG is the predominant glycolipid found in Bacillales and is also used as a membrane anchor for lipoteichoic acid (LTA). In Staphylococcus epidermidis (strain ATCC 12228 / FDA PCI 1200), this protein is Processive diacylglycerol beta-glucosyltransferase.